Reading from the N-terminus, the 615-residue chain is Dolichyl-diphosphooligosaccharide--protein glycosyltransferase subunit 1A (615 aa).

Positions 1-28 are cleaved as a signal peptide; it reads MATPPPLRRVAALLLLLVAAASTPTARA. Over 29 to 437 the chain is Lumenal; that stretch reads DLVVTRADRK…RFNNISLLRE (409 aa). The residue at position 187 (K187) is an N6-acetyllysine. N300, N353, and N431 each carry an N-linked (GlcNAc...) asparagine glycan. A helical membrane pass occupies residues 438–455; it reads PMMLITGFFLLFMACIVY. Over 456-615 the chain is Cytoplasmic; it reads MRTDMSISKN…ESLLEYISEI (160 aa).

The protein belongs to the OST1 family. In terms of assembly, component of the oligosaccharyltransferase (OST) complex.

It is found in the endoplasmic reticulum membrane. The protein operates within protein modification; protein glycosylation. In terms of biological role, subunit of the oligosaccharyl transferase (OST) complex that catalyzes the initial transfer of a defined glycan (Glc(3)Man(9)GlcNAc(2) in eukaryotes) from the lipid carrier dolichol-pyrophosphate to an asparagine residue within an Asn-X-Ser/Thr consensus motif in nascent polypeptide chains, the first step in protein N-glycosylation. N-glycosylation occurs cotranslationally and the complex associates with the Sec61 complex at the channel-forming translocon complex that mediates protein translocation across the endoplasmic reticulum (ER). All subunits are required for a maximal enzyme activity. In Oryza sativa subsp. japonica (Rice), this protein is Dolichyl-diphosphooligosaccharide--protein glycosyltransferase subunit 1A (OST1A).